The following is a 382-amino-acid chain: Na(+)/H(+) antiporter NhaA (382 aa).

A run of 10 helical transmembrane segments spans residues 11–31 (FSVPLIAGVVVALLWANLDPA), 47–67 (FHFVVNELFMVLFFGIAAVEI), 88–108 (LATLGGVVGPVLVYLGLNAII), 116–136 (GWGIPTATDIALAWLVARLVF), 145–165 (FLLLLAVADDAIGLAIIAVFY), 170–190 (HPTEPIWLFLTVAGMVVAYIL), 261–283 (IVVDFGLFMFGLANAGVGFSSVG), 299–319 (LGIFAMGYVGRALGFPLPQQV), 327–347 (TGLVAGIGLTVALFVAGVAFV), and 353–373 (GSAKMGALLSGGVSIVAIMLG).

The protein belongs to the NhaA Na(+)/H(+) (TC 2.A.33) antiporter family.

Its subcellular location is the cell inner membrane. It catalyses the reaction Na(+)(in) + 2 H(+)(out) = Na(+)(out) + 2 H(+)(in). Na(+)/H(+) antiporter that extrudes sodium in exchange for external protons. This is Na(+)/H(+) antiporter NhaA from Geobacter sulfurreducens (strain ATCC 51573 / DSM 12127 / PCA).